Reading from the N-terminus, the 150-residue chain is Transcriptional regulator MraZ (150 aa).

SpoVT-AbrB domains lie at Val5 to Glu51 and Ala80 to Thr123.

This sequence belongs to the MraZ family. Forms oligomers.

The protein localises to the cytoplasm. It localises to the nucleoid. The chain is Transcriptional regulator MraZ from Thioalkalivibrio sulfidiphilus (strain HL-EbGR7).